A 208-amino-acid polypeptide reads, in one-letter code: MQARGTVKVQGDANVDGKMSTGQHPHHQHLNSTQANATTTALEYRAMNRPLYRGPISHNIISEMAEGFYVLSGGYKKLFIPSKDVYALMQNVGMHLTEEEFHDALRVIGQSEPQNADELSFSDFLLLMTREVDDTMADELRSAFFHYDKHKTGYVTRKQFTELFATLAERSTPEELEELLAVAEVDETDDKIDYNRFVNELTSRVNCM.

Residues 1-35 (MQARGTVKVQGDANVDGKMSTGQHPHHQHLNSTQA) are disordered. EF-hand domains follow at residues 64 to 98 (MAEG…HLTE), 99 to 134 (EEFH…EVDD), 135 to 170 (TMAD…LAER), and 171 to 206 (STPE…SRVN). Residues glutamate 118, aspartate 123, aspartate 148, threonine 152, and tyrosine 154 each contribute to the Ca(2+) site.

The protein is EF-hand protein 5 variant 2 of Trypanosoma cruzi.